Reading from the N-terminus, the 170-residue chain is Xanthine-guanine phosphoribosyltransferase (170 aa).

Residues 41–42 (RG) and 98–106 (DDLTDTGKT) each bind 5-phospho-alpha-D-ribose 1-diphosphate. Residue aspartate 99 coordinates Mg(2+). Aspartate 102 contributes to the guanine binding site. Aspartate 102 is a binding site for xanthine. GMP is bound at residue 102–106 (DTGKT).

This sequence belongs to the purine/pyrimidine phosphoribosyltransferase family. XGPT subfamily. As to quaternary structure, homotetramer. The cofactor is Mg(2+).

It localises to the cell inner membrane. The catalysed reaction is GMP + diphosphate = guanine + 5-phospho-alpha-D-ribose 1-diphosphate. The enzyme catalyses XMP + diphosphate = xanthine + 5-phospho-alpha-D-ribose 1-diphosphate. It catalyses the reaction IMP + diphosphate = hypoxanthine + 5-phospho-alpha-D-ribose 1-diphosphate. The protein operates within purine metabolism; GMP biosynthesis via salvage pathway; GMP from guanine: step 1/1. It participates in purine metabolism; XMP biosynthesis via salvage pathway; XMP from xanthine: step 1/1. Purine salvage pathway enzyme that catalyzes the transfer of the ribosyl-5-phosphate group from 5-phospho-alpha-D-ribose 1-diphosphate (PRPP) to the N9 position of the 6-oxopurines guanine and xanthine to form the corresponding ribonucleotides GMP (guanosine 5'-monophosphate) and XMP (xanthosine 5'-monophosphate), with the release of PPi. To a lesser extent, also acts on hypoxanthine. The protein is Xanthine-guanine phosphoribosyltransferase of Brucella abortus (strain 2308).